A 441-amino-acid chain; its full sequence is Ribosomal protein uS12 methylthiotransferase RimO (441 aa).

The 111-residue stretch at 8–118 (PKIGFVSLGC…VLEHVHHYVP (111 aa)) folds into the MTTase N-terminal domain. 6 residues coordinate [4Fe-4S] cluster: C17, C53, C82, C150, C154, and C157. The Radical SAM core domain maps to 136–373 (LTPRHYAYLK…MQLQQQISAE (238 aa)). Residues 376–441 (QEKVGREILV…DEYDLWGSRV (66 aa)) enclose the TRAM domain.

Belongs to the methylthiotransferase family. RimO subfamily. Requires [4Fe-4S] cluster as cofactor.

It is found in the cytoplasm. It catalyses the reaction L-aspartate(89)-[ribosomal protein uS12]-hydrogen + (sulfur carrier)-SH + AH2 + 2 S-adenosyl-L-methionine = 3-methylsulfanyl-L-aspartate(89)-[ribosomal protein uS12]-hydrogen + (sulfur carrier)-H + 5'-deoxyadenosine + L-methionine + A + S-adenosyl-L-homocysteine + 2 H(+). Catalyzes the methylthiolation of an aspartic acid residue of ribosomal protein uS12. The polypeptide is Ribosomal protein uS12 methylthiotransferase RimO (Shigella sonnei (strain Ss046)).